Reading from the N-terminus, the 84-residue chain is Sulfur carrier protein TusA (84 aa).

The Cysteine persulfide intermediate role is filled by Cys-21.

Belongs to the sulfur carrier protein TusA family.

It localises to the cytoplasm. Functionally, sulfur carrier protein which probably makes part of a sulfur-relay system. The sequence is that of Sulfur carrier protein TusA from Pseudomonas syringae pv. tomato (strain ATCC BAA-871 / DC3000).